We begin with the raw amino-acid sequence, 153 residues long: NADPH-dependent 7-cyano-7-deazaguanine reductase (153 aa).

Cysteine 51 serves as the catalytic Thioimide intermediate. Aspartate 58 serves as the catalytic Proton donor. Substrate-binding positions include 73-75 and 92-93; these read LES and HE.

This sequence belongs to the GTP cyclohydrolase I family. QueF type 1 subfamily.

The protein resides in the cytoplasm. It catalyses the reaction 7-aminomethyl-7-carbaguanine + 2 NADP(+) = 7-cyano-7-deazaguanine + 2 NADPH + 3 H(+). It participates in tRNA modification; tRNA-queuosine biosynthesis. Its function is as follows. Catalyzes the NADPH-dependent reduction of 7-cyano-7-deazaguanine (preQ0) to 7-aminomethyl-7-deazaguanine (preQ1). This chain is NADPH-dependent 7-cyano-7-deazaguanine reductase, found in Bradyrhizobium diazoefficiens (strain JCM 10833 / BCRC 13528 / IAM 13628 / NBRC 14792 / USDA 110).